A 55-amino-acid polypeptide reads, in one-letter code: Photosystem II reaction center X protein (55 aa).

Residues 24–44 (IGSFLAAAALIVVPAASFLLW) traverse the membrane as a helical segment.

It belongs to the PsbX family. Type 2 subfamily. As to quaternary structure, PSII consists of a core antenna complex that captures photons, and an electron transfer chain that converts photonic excitation into a charge separation. PSII forms dimeric complexes.

The protein localises to the cellular thylakoid membrane. Its function is as follows. Involved in the binding and/or turnover of quinones at the Q(B) site of Photosystem II. The polypeptide is Photosystem II reaction center X protein (Prochlorococcus marinus (strain SARG / CCMP1375 / SS120)).